A 630-amino-acid chain; its full sequence is GATA-type transcription factor SRE1 (630 aa).

Disordered regions lie at residues 1 to 139 (MTGL…TPLW) and 162 to 203 (DRPT…RLTD). 3 stretches are compositionally biased toward polar residues: residues 66–82 (DNTQGDGSRNMDSQLQN), 115–133 (KAQSKEQAFTGHSCSNCGT), and 175–196 (YGSSSAQTLDKSRSSTSPTNDG). A GATA-type 1 zinc finger spans residues 128–152 (CSNCGTKRTPLWRRSPTGATICNAC). The cystein-rich region (CRR) stretch occupies residues 219 to 237 (CPGGGSCNGTGGAEGCDGC). Residues 256 to 283 (HTPRTSPQVSTQGGPGSTEGDAGSSNPE) form a disordered region. Residues 258-267 (PRTSPQVSTQ) are compositionally biased toward polar residues. A GATA-type 2 zinc finger spans residues 291–315 (CQNCQTTVTPLWRRDENGHPICNAC). The disordered stretch occupies residues 339 to 609 (KRVVPAMREQ…AKAERRARLQ (271 aa)). A compositionally biased stretch (polar residues) spans 349–363 (SPPSATQSSNGSVSP). Low complexity-rich tracts occupy residues 436 to 447 (NNHNNGETTNTH) and 492 to 503 (SSSSASFPNNNP). Positions 504 to 513 (GRFNSISSLL) are enriched in polar residues. Residues 558–568 (SHSPPRFSPSL) are compositionally biased toward low complexity. Positions 595–609 (VDHRDAKAERRARLQ) are enriched in basic and acidic residues. Residues 595–630 (VDHRDAKAERRARLQREAQDMREALKAKERELALLE) adopt a coiled-coil conformation.

The protein resides in the nucleus. Its function is as follows. GATA-type transcription repressor that regulates iron- acquisition genes through specific binding the GATA sequence element 5'-(G/A)ATC(T/A)GATAA-3' of target promoters in an iron- and zinc-dependent manner. Regulation occurs via direct binding of iron ions. Iron acquisition regulation is critical for survival under both iron-limiting conditions (to acquire essential iron) and iron-replete conditions (to limit iron toxicity). SRE1 targets include genes encoding a number of key iron-regulated factors such as those involved in siderophore biosynthesis, presumed ferric reductase activity, iron-responsive transcriptional regulation, oxidative stress response, as well as genes encoding a number of putative oxidoreductases, metabolic and mitochondrial enzymes, superoxide dismutase, and genes previously identified as induced during nitrosative stress. The polypeptide is GATA-type transcription factor SRE1 (Ajellomyces capsulatus (Darling's disease fungus)).